Reading from the N-terminus, the 659-residue chain is Putative oxidoreductase AegA (659 aa).

4Fe-4S ferredoxin-type domains follow at residues 3–22, 47–77, 78–107, 114–147, and 218–252; these read RFIMANSQQCLGCHACEIAC, HQQQRSAVTCHHCEDAPCARSCPNGAISHVD, DSIQVNQQKCIGCKSCVVACPFGTMQIVLT, VKATAHKCDLCAGRENGPACVENCPADALQLVTD, and DQAQREASRCLKCGEHSVCEWTCPLHNHIPQWIEL. [4Fe-4S] cluster-binding residues include Cys-12, Cys-15, Cys-18, Cys-22, Cys-56, Cys-59, Cys-64, Cys-68, Cys-87, Cys-90, Cys-93, Cys-97, Cys-121, Cys-124, Cys-133, Cys-137, Cys-227, Cys-230, Cys-236, and Cys-240.

The cofactor is [4Fe-4S] cluster.

In terms of biological role, involved in formate-dependent uric acid degradation under microaerobic and anaerobic conditions. May reduce the enzymes necessary for uric acid degradation. The polypeptide is Putative oxidoreductase AegA (Escherichia coli (strain K12)).